The chain runs to 285 residues: (3S)-malyl-CoA thioesterase (285 aa).

R70 and E122 together coordinate substrate. Residues E122 and D148 each contribute to the Mg(2+) site.

It belongs to the HpcH/HpaI aldolase family. As to quaternary structure, homodimer or homotrimer. Mg(2+) is required as a cofactor.

It catalyses the reaction (S)-malyl-CoA + H2O = (S)-malate + CoA + H(+). Its activity is regulated as follows. Reversibly inhibited by EDTA. Stimulated by the divalent cations Mg(2+) and Mn(2+). Functionally, catalyzes the hydrolysis of (3S)-malyl-CoA to (3S)-malate and free CoA. Inactive towards beta-methylmalyl-CoA and other CoA esters. This chain is (3S)-malyl-CoA thioesterase, found in Cereibacter sphaeroides (strain ATCC 17023 / DSM 158 / JCM 6121 / CCUG 31486 / LMG 2827 / NBRC 12203 / NCIMB 8253 / ATH 2.4.1.) (Rhodobacter sphaeroides).